The sequence spans 252 residues: tRNA pseudouridine synthase A (252 aa).

Aspartate 52 (nucleophile) is an active-site residue. Tyrosine 112 provides a ligand contact to substrate.

This sequence belongs to the tRNA pseudouridine synthase TruA family. Homodimer.

The enzyme catalyses uridine(38/39/40) in tRNA = pseudouridine(38/39/40) in tRNA. Its function is as follows. Formation of pseudouridine at positions 38, 39 and 40 in the anticodon stem and loop of transfer RNAs. The sequence is that of tRNA pseudouridine synthase A from Porphyromonas gingivalis (strain ATCC 33277 / DSM 20709 / CIP 103683 / JCM 12257 / NCTC 11834 / 2561).